We begin with the raw amino-acid sequence, 74 residues long: Invertase 3 (74 aa).

A signal peptide spans 1–19 (MLLQAFIFLLAGFAAKISA). N-linked (GlcNAc...) asparagine glycosylation is present at Asn23. Residues 39 to 42 (WMND) and Gln60 each bind substrate. Asp42 is a catalytic residue. Asn64 carries N-linked (GlcNAc...) asparagine glycosylation.

This sequence belongs to the glycosyl hydrolase 32 family.

It carries out the reaction Hydrolysis of terminal non-reducing beta-D-fructofuranoside residues in beta-D-fructofuranosides.. The sequence is that of Invertase 3 (SUC3) from Saccharomyces cerevisiae (Baker's yeast).